Reading from the N-terminus, the 406-residue chain is Renin (406 aa).

An N-terminal signal peptide occupies residues 1–23 (MDGWRRMPRWGLLLLLWGSCTFG). Positions 24–66 (LPTDTTTFKRIFLKRMPSIRESLKERGVDMARLGPEWSQPMKR) are cleaved as a propeptide — activation peptide. An N-linked (GlcNAc...) asparagine glycan is attached at Asn71. Residues 86–403 (YYGEIGIGTP…DRRNNRIGFA (318 aa)) enclose the Peptidase A1 domain. Asp104 is an active-site residue. An intrachain disulfide couples Cys117 to Cys124. Asn141 is a glycosylation site (N-linked (GlcNAc...) asparagine). A disulfide bridge connects residues Cys283 and Cys287. Asp292 is a catalytic residue. A disulfide bond links Cys325 and Cys362.

The protein belongs to the peptidase A1 family. As to quaternary structure, interacts with ATP6AP2.

It localises to the secreted. The protein resides in the membrane. It catalyses the reaction Cleavage of Leu-|-Xaa bond in angiotensinogen to generate angiotensin I.. Interaction with ATP6AP2 results in a 5-fold increased efficiency in angiotensinogen processing. Its function is as follows. Renin is a highly specific endopeptidase, whose only known function is to generate angiotensin I from angiotensinogen in the plasma, initiating a cascade of reactions that produce an elevation of blood pressure and increased sodium retention by the kidney. In Homo sapiens (Human), this protein is Renin (REN).